The chain runs to 660 residues: Arginine--tRNA ligase, cytoplasmic (660 aa).

A could be involved in the assembly of the multisynthetase complex region spans residues 1–72 (MELPVCFYEE…LEEKKKSSKS (72 aa)). Residues 200–202 (SPN), His211, Tyr384, Asp388, and Gln412 contribute to the L-arginine site. The 'HIGH' region motif lies at 201–212 (PNIAKEMHVGHL). The interval 529–543 (NTAAYLLYAYTRIRS) is interaction with tRNA.

It belongs to the class-I aminoacyl-tRNA synthetase family. As to quaternary structure, monomer; also part of a multisubunit complex that groups tRNA ligases for Arg, Asp, Glu, Gln, Ile, Leu, Lys, Met and Pro.

Its subcellular location is the cytoplasm. The protein resides in the cytosol. It carries out the reaction tRNA(Arg) + L-arginine + ATP = L-arginyl-tRNA(Arg) + AMP + diphosphate. In terms of biological role, forms part of a macromolecular complex that catalyzes the attachment of specific amino acids to cognate tRNAs during protein synthesis. This Xenopus tropicalis (Western clawed frog) protein is Arginine--tRNA ligase, cytoplasmic (rars1).